Consider the following 471-residue polypeptide: ATP synthase subunit beta (471 aa).

ATP is bound at residue 159 to 166 (GGAGVGKT).

This sequence belongs to the ATPase alpha/beta chains family. In terms of assembly, F-type ATPases have 2 components, CF(1) - the catalytic core - and CF(0) - the membrane proton channel. CF(1) has five subunits: alpha(3), beta(3), gamma(1), delta(1), epsilon(1). CF(0) has four main subunits: a(1), b(1), b'(1) and c(9-12).

The protein resides in the cell membrane. The catalysed reaction is ATP + H2O + 4 H(+)(in) = ADP + phosphate + 5 H(+)(out). In terms of biological role, produces ATP from ADP in the presence of a proton gradient across the membrane. The catalytic sites are hosted primarily by the beta subunits. The protein is ATP synthase subunit beta of Heliobacterium modesticaldum (strain ATCC 51547 / Ice1).